We begin with the raw amino-acid sequence, 559 residues long: Dihydroxy-acid dehydratase (559 aa).

Asp78 is a binding site for Mg(2+). [2Fe-2S] cluster is bound at residue Cys119. Positions 120 and 121 each coordinate Mg(2+). Lys121 carries the N6-carboxylysine modification. Cys192 provides a ligand contact to [2Fe-2S] cluster. Glu446 contributes to the Mg(2+) binding site. Ser472 serves as the catalytic Proton acceptor.

The protein belongs to the IlvD/Edd family. As to quaternary structure, homodimer. [2Fe-2S] cluster is required as a cofactor. The cofactor is Mg(2+).

It catalyses the reaction (2R)-2,3-dihydroxy-3-methylbutanoate = 3-methyl-2-oxobutanoate + H2O. The catalysed reaction is (2R,3R)-2,3-dihydroxy-3-methylpentanoate = (S)-3-methyl-2-oxopentanoate + H2O. The protein operates within amino-acid biosynthesis; L-isoleucine biosynthesis; L-isoleucine from 2-oxobutanoate: step 3/4. Its pathway is amino-acid biosynthesis; L-valine biosynthesis; L-valine from pyruvate: step 3/4. In terms of biological role, functions in the biosynthesis of branched-chain amino acids. Catalyzes the dehydration of (2R,3R)-2,3-dihydroxy-3-methylpentanoate (2,3-dihydroxy-3-methylvalerate) into 2-oxo-3-methylpentanoate (2-oxo-3-methylvalerate) and of (2R)-2,3-dihydroxy-3-methylbutanoate (2,3-dihydroxyisovalerate) into 2-oxo-3-methylbutanoate (2-oxoisovalerate), the penultimate precursor to L-isoleucine and L-valine, respectively. The protein is Dihydroxy-acid dehydratase of Wolinella succinogenes (strain ATCC 29543 / DSM 1740 / CCUG 13145 / JCM 31913 / LMG 7466 / NCTC 11488 / FDC 602W) (Vibrio succinogenes).